A 91-amino-acid polypeptide reads, in one-letter code: Small ribosomal subunit protein uS19 (91 aa).

Belongs to the universal ribosomal protein uS19 family.

Protein S19 forms a complex with S13 that binds strongly to the 16S ribosomal RNA. This Sphingopyxis alaskensis (strain DSM 13593 / LMG 18877 / RB2256) (Sphingomonas alaskensis) protein is Small ribosomal subunit protein uS19.